The following is a 711-amino-acid chain: DNA topoisomerase 3 (711 aa).

The region spanning 2-135 is the Toprim domain; it reads KSLILAEKPS…IRRLWISSVT (134 aa). Mg(2+) contacts are provided by Glu8 and Asp104. Positions 152–580 constitute a Topo IA-type catalytic domain; sequence YNDLYYAALA…EMKDFTKDVV (429 aa). The segment at 186 to 191 is interaction with DNA; it reads SLGRVQ. Tyr305 (O-(5'-phospho-DNA)-tyrosine intermediate) is an active-site residue. Residues 691–711 are disordered; it reads MNKNEGLDNNPFKDALKNLNL.

Belongs to the type IA topoisomerase family. Mg(2+) serves as cofactor.

It carries out the reaction ATP-independent breakage of single-stranded DNA, followed by passage and rejoining.. Its function is as follows. Releases the supercoiling and torsional tension of DNA, which is introduced during the DNA replication and transcription, by transiently cleaving and rejoining one strand of the DNA duplex. Introduces a single-strand break via transesterification at a target site in duplex DNA. The scissile phosphodiester is attacked by the catalytic tyrosine of the enzyme, resulting in the formation of a DNA-(5'-phosphotyrosyl)-enzyme intermediate and the expulsion of a 3'-OH DNA strand. The free DNA strand then undergoes passage around the unbroken strand, thus removing DNA supercoils. Finally, in the religation step, the DNA 3'-OH attacks the covalent intermediate to expel the active-site tyrosine and restore the DNA phosphodiester backbone. The sequence is that of DNA topoisomerase 3 from Staphylococcus aureus (strain NCTC 8325 / PS 47).